The sequence spans 25 residues: Neuromedin-U-25 (25 aa).

Asparagine 25 carries the asparagine amide modification.

The protein belongs to the NmU family.

It is found in the secreted. Functionally, stimulates uterine smooth muscle contraction and causes selective vasoconstriction. The sequence is that of Neuromedin-U-25 (NMU) from Sus scrofa (Pig).